The chain runs to 478 residues: Solute carrier family 49 member 4 (478 aa).

Positions 1–27 (MGSGWSSEEEERQPLLGPGLGPAPGAT) are disordered. Over 1–51 (MGSGWSSEEEERQPLLGPGLGPAPGATRRGREAAAVLPAAGPSPGRVYGRR) the chain is Cytoplasmic. Residues 15-16 (LL) carry the Di-leucine motif; mediates lysosomal localization motif. The helical transmembrane segment at 52–72 (WLVLLLFSLLAFAQGLVWNTW) threads the bilayer. At 73 to 89 (GPIQNSARQAYSFTGWD) the chain is on the lumenal side. A helical transmembrane segment spans residues 90–110 (IALLVLWGPIGFLPCFAFMWL). Topologically, residues 111–117 (LDKRGLR) are cytoplasmic. Residues 118–138 (ITVLLTSFLMVLGTGLRCIPV) traverse the membrane as a helical segment. Over 139–152 (SDLTLKKRLIHGGQ) the chain is Lumenal. A helical transmembrane segment spans residues 153-173 (ILNGLAGPTVMNAAPFLSTTW). Residues 174 to 184 (FSADERATATA) are Cytoplasmic-facing. The helical transmembrane segment at 185–205 (IASMLSYLGGACAFLVGPLVV) threads the bilayer. The Lumenal segment spans residues 206–229 (PAPNGTAPLLTAESSRDHIKDRIE). An N-linked (GlcNAc...) asparagine glycan is attached at Asn-209. Residues 230–250 (TVLYAEFGVVCLIFSATLAYF) form a helical membrane-spanning segment. Residues 251 to 281 (PPRPPLPPSVAAASQRLSYRRSFCRLLSNLR) are Cytoplasmic-facing. A helical transmembrane segment spans residues 282–302 (FLMIALAYAIPLGVFAGWSGV). Residues 303 to 314 (LDLILTPVHVSQ) lie on the Lumenal side of the membrane. The helical transmembrane segment at 315-335 (VDAGWIGFWSIVGGCVVGIAM) threads the bilayer. Over 336–347 (ARFADFIRGMLK) the chain is Cytoplasmic. The helical transmembrane segment at 348–368 (LILLLLFSGATLSSTWFTLTC) threads the bilayer. Topologically, residues 369–384 (LNSVTHLPLTTVTLYA) are lumenal. The helical transmembrane segment at 385–405 (SCILLGVFLNSSVPIFFELFV) threads the bilayer. Over 406–414 (ETVYPVPEG) the chain is Cytoplasmic. The helical transmembrane segment at 415-435 (ITCGVVTFLSNMFMGVLLFFV) threads the bilayer. The Lumenal portion of the chain corresponds to 436 to 442 (TFYHTEL). The chain crosses the membrane as a helical span at residues 443–463 (SWFNWCLPGSCLLSLLLILCF). The Cytoplasmic portion of the chain corresponds to 464–478 (RESYDRLYLDVVVSV).

Belongs to the major facilitator superfamily. Cleaved in lysosomes by cathepsin L between Leu-214 and Ala-261, generating a N-glycosylated N-terminal and a non-glycosylated C-terminal fragment.

The protein localises to the lysosome membrane. It carries out the reaction pyridoxine(out) + n H(+)(out) = pyridoxine(in) + n H(+)(in). Functionally, mediates H(+)-dependent pyridoxine transport. In Rattus norvegicus (Rat), this protein is Solute carrier family 49 member 4 (Slc49a4).